The following is a 709-amino-acid chain: Kelch-like protein 11 (709 aa).

An N-terminal signal peptide occupies residues 1 to 15 (MAAAVAAAAAAAAAA). One can recognise a BTB domain in the interval 95-171 (CDITLCFGGA…MYTGRIRVST (77 aa)). Positions 206-308 (CVAIHSLAHM…KPTYLTRHVK (103 aa)) constitute a BACK domain. Kelch repeat units follow at residues 361-408 (VIMV…ITES), 409-454 (YVYV…EVKG), 456-502 (LYSI…AIED), 504-557 (FVYI…VVNS), and 611-662 (DVFI…HVRI). At Ser466 the chain carries Phosphoserine.

As to quaternary structure, homodimer. Interacts with CUL3. Component of a cullin-RING-based BCR (BTB-CUL3-RBX1) E3 ubiquitin-protein ligase complex.

Component of a cullin-RING-based BCR (BTB-CUL3-RBX1) E3 ubiquitin-protein ligase complex that mediates the ubiquitination of target proteins, leading most often to their proteasomal degradation. In Mus musculus (Mouse), this protein is Kelch-like protein 11 (Klhl11).